Consider the following 477-residue polypeptide: Probable cytosolic Fe-S cluster assembly factor CG17683 (477 aa).

Cysteine 23, cysteine 68, cysteine 71, cysteine 74, cysteine 187, cysteine 243, cysteine 395, and cysteine 399 together coordinate [4Fe-4S] cluster.

The protein belongs to the NARF family.

Functionally, component of the cytosolic iron-sulfur (Fe/S) protein assembly machinery. Required for maturation of extramitochondrial Fe/S proteins. The chain is Probable cytosolic Fe-S cluster assembly factor CG17683 from Drosophila melanogaster (Fruit fly).